The sequence spans 184 residues: Adenine phosphoribosyltransferase (184 aa).

This sequence belongs to the purine/pyrimidine phosphoribosyltransferase family. Homodimer.

It localises to the cytoplasm. It carries out the reaction AMP + diphosphate = 5-phospho-alpha-D-ribose 1-diphosphate + adenine. The protein operates within purine metabolism; AMP biosynthesis via salvage pathway; AMP from adenine: step 1/1. Functionally, catalyzes a salvage reaction resulting in the formation of AMP, that is energically less costly than de novo synthesis. This chain is Adenine phosphoribosyltransferase, found in Myxococcus xanthus (strain DK1622).